The sequence spans 248 residues: Pyridoxine 5'-phosphate synthase (248 aa).

Asn7 is a 3-amino-2-oxopropyl phosphate binding site. 9–10 (DH) serves as a coordination point for 1-deoxy-D-xylulose 5-phosphate. Arg18 contributes to the 3-amino-2-oxopropyl phosphate binding site. The active-site Proton acceptor is the His43. 1-deoxy-D-xylulose 5-phosphate is bound by residues Arg45 and His50. Catalysis depends on Glu70, which acts as the Proton acceptor. Thr100 is a binding site for 1-deoxy-D-xylulose 5-phosphate. His191 acts as the Proton donor in catalysis. 3-amino-2-oxopropyl phosphate contacts are provided by residues Gly192 and 213–214 (GH).

It belongs to the PNP synthase family. As to quaternary structure, homooctamer; tetramer of dimers.

The protein resides in the cytoplasm. The catalysed reaction is 3-amino-2-oxopropyl phosphate + 1-deoxy-D-xylulose 5-phosphate = pyridoxine 5'-phosphate + phosphate + 2 H2O + H(+). Its pathway is cofactor biosynthesis; pyridoxine 5'-phosphate biosynthesis; pyridoxine 5'-phosphate from D-erythrose 4-phosphate: step 5/5. Catalyzes the complicated ring closure reaction between the two acyclic compounds 1-deoxy-D-xylulose-5-phosphate (DXP) and 3-amino-2-oxopropyl phosphate (1-amino-acetone-3-phosphate or AAP) to form pyridoxine 5'-phosphate (PNP) and inorganic phosphate. In Bordetella bronchiseptica (strain ATCC BAA-588 / NCTC 13252 / RB50) (Alcaligenes bronchisepticus), this protein is Pyridoxine 5'-phosphate synthase.